A 398-amino-acid polypeptide reads, in one-letter code: Candidapepsin-3 (398 aa).

Positions 1 to 18 (MFLKNIFIALAIALLADA) are cleaved as a signal peptide. The propeptide at 19-58 (TPTTSNNSPGFVALNFDVIKTHKNVTGPQGEINTNVNVKR) is activation peptide. Residue Asn42 is glycosylated (N-linked (GlcNAc...) asparagine). The region spanning 72–384 (YASDITVGSN…DLDDNEISLA (313 aa)) is the Peptidase A1 domain. Asp90 is a catalytic residue. A pepstatin A-binding site is contributed by 90 to 92 (DTG). The span at 103-112 (VSCQAGQGQD) shows a compositional bias: polar residues. The segment at 103–139 (VSCQAGQGQDPNFCKNEGTYSPSSSSSSQNLNSPFSI) is disordered. A disulfide bridge links Cys105 with Cys116. Residues 123–138 (SPSSSSSSQNLNSPFS) show a composition bias toward low complexity. Pepstatin A-binding positions include 140–143 (EYGD) and 274–278 (DSGTT). The active site involves Asp274. Cys312 and Cys350 are disulfide-bonded. The N-linked (GlcNAc...) asparagine glycan is linked to Asn313.

Belongs to the peptidase A1 family. In terms of processing, O-glycosylated.

It is found in the secreted. It carries out the reaction Preferential cleavage at the carboxyl of hydrophobic amino acids, but fails to cleave 15-Leu-|-Tyr-16, 16-Tyr-|-Leu-17 and 24-Phe-|-Phe-25 of insulin B chain. Activates trypsinogen, and degrades keratin.. The chain is Candidapepsin-3 (SAP3) from Candida albicans (strain WO-1) (Yeast).